A 300-amino-acid polypeptide reads, in one-letter code: UDP-N-acetylenolpyruvoylglucosamine reductase (300 aa).

Residues 30–194 (RVGGPADFFV…IGATFVLDSD (165 aa)) enclose the FAD-binding PCMH-type domain. Arginine 174 is a catalytic residue. Serine 223 functions as the Proton donor in the catalytic mechanism. The active site involves glutamate 293.

This sequence belongs to the MurB family. The cofactor is FAD.

The protein resides in the cytoplasm. The catalysed reaction is UDP-N-acetyl-alpha-D-muramate + NADP(+) = UDP-N-acetyl-3-O-(1-carboxyvinyl)-alpha-D-glucosamine + NADPH + H(+). It participates in cell wall biogenesis; peptidoglycan biosynthesis. In terms of biological role, cell wall formation. The sequence is that of UDP-N-acetylenolpyruvoylglucosamine reductase from Geobacter sulfurreducens (strain ATCC 51573 / DSM 12127 / PCA).